A 629-amino-acid chain; its full sequence is tRNA uridine 5-carboxymethylaminomethyl modification enzyme MnmG (629 aa).

Residues Gly15 to Gly20, Val127, and Ser182 contribute to the FAD site. The disordered stretch occupies residues Thr203–Pro226. A compositionally biased stretch (basic and acidic residues) spans Ser215–Pro226. Gly274–Phe288 serves as a coordination point for NAD(+). An FAD-binding site is contributed by Gln371.

This sequence belongs to the MnmG family. As to quaternary structure, homodimer. Heterotetramer of two MnmE and two MnmG subunits. FAD serves as cofactor.

Its subcellular location is the cytoplasm. Its function is as follows. NAD-binding protein involved in the addition of a carboxymethylaminomethyl (cmnm) group at the wobble position (U34) of certain tRNAs, forming tRNA-cmnm(5)s(2)U34. In Listeria innocua serovar 6a (strain ATCC BAA-680 / CLIP 11262), this protein is tRNA uridine 5-carboxymethylaminomethyl modification enzyme MnmG.